A 184-amino-acid chain; its full sequence is Shikimate kinase (184 aa).

17–22 (GAGKTT) contacts ATP. Thr-21 provides a ligand contact to Mg(2+). Residues Asp-39, Arg-63, and Gly-85 each contribute to the substrate site. Arg-123 contacts ATP. Substrate is bound at residue Arg-142.

The protein belongs to the shikimate kinase family. Monomer. Mg(2+) is required as a cofactor.

Its subcellular location is the cytoplasm. The catalysed reaction is shikimate + ATP = 3-phosphoshikimate + ADP + H(+). Its pathway is metabolic intermediate biosynthesis; chorismate biosynthesis; chorismate from D-erythrose 4-phosphate and phosphoenolpyruvate: step 5/7. Catalyzes the specific phosphorylation of the 3-hydroxyl group of shikimic acid using ATP as a cosubstrate. This Burkholderia thailandensis (strain ATCC 700388 / DSM 13276 / CCUG 48851 / CIP 106301 / E264) protein is Shikimate kinase.